Reading from the N-terminus, the 452-residue chain is Glycine receptor subunit alpha-2 (452 aa).

The signal sequence occupies residues 1 to 27 (MNRQLVNILTALFAFFLETNHFRTAFC). Over 28–256 (KDHDSRSGKQ…KFHLERQMGY (229 aa)) the chain is Extracellular. An N-linked (GlcNAc...) asparagine glycan is attached at Asn-72. Residue Arg-99 coordinates glycine. Strychnine is bound at residue Arg-99. An N-linked (GlcNAc...) asparagine glycan is attached at Asn-103. Position 163 (Ser-163) interacts with glycine. A disulfide bond links Cys-172 and Cys-186. Residues Glu-226 and Glu-228 each contribute to the Zn(2+) site. Cysteines 232 and 243 form a disulfide. A glycine-binding site is contributed by Thr-238. His-249 lines the Zn(2+) pocket. A helical transmembrane segment spans residues 257–278 (YLIQMYIPSLLIVILSWVSFWI). The Cytoplasmic segment spans residues 279–283 (NMDAA). A helical membrane pass occupies residues 284-304 (PARVALGITTVLTMTTQSSGS). At 305–315 (RASLPKVSYVK) the chain is on the extracellular side. Residues 316 to 336 (AIDIWMAVCLLFVFAALLEYA) traverse the membrane as a helical segment. At 337–420 (AVNFVSRQHK…FVDRAKRIDT (84 aa)) the chain is on the cytoplasmic side. A helical transmembrane segment spans residues 421-441 (ISRAAFPLAFLIFNIFYWITY). Residues 442–452 (KIIRHEDVHKK) lie on the Extracellular side of the membrane.

The protein belongs to the ligand-gated ion channel (TC 1.A.9) family. Glycine receptor (TC 1.A.9.3) subfamily. GLRA2 sub-subfamily. Interacts with GLRB. Heteropentamer composed of GLRA2 and GLRB. Functional GLRB-GLRA2 heteropentamers contain four GLRA2 subunits and one GLRB subunit, although alternative subunit composition cannot be excluded. Homopentamer (in vitro). Both homopentamers and heteropentamers form functional ion channels, but their characteristics are subtly different.

It localises to the postsynaptic cell membrane. It is found in the synapse. Its subcellular location is the cell membrane. The protein resides in the cell projection. It catalyses the reaction chloride(in) = chloride(out). With respect to regulation, channel opening is triggered by extracellular glycine. Channel opening is also triggered by taurine and beta-alanine. Inhibited by strychnine. Inhibited by picrotoxin. Channel activity is potentiated by 10-100 uM Zn(2+). Channel activity is marginally increased by 50 mM ethanol; it is strongly increased by a combination of 0.5 uM Zn(2+) and 50 mM ethanol. Channel activity is inhibited by 100-1000 uM Zn(2+). Functionally, subunit of heteromeric glycine-gated chloride channels. Plays a role in synaptic plasticity. Contributes to the generation of inhibitory postsynaptic currents, and is involved in the down-regulation of neuronal excitability. Plays a role in cellular responses to ethanol. This is Glycine receptor subunit alpha-2 from Homo sapiens (Human).